A 479-amino-acid chain; its full sequence is Nuclear receptor subfamily 6 group A member 1 (479 aa).

Positions 1–32 (MERDERPPSGGGGGGGSAGFLEPPAALPPPPR) are disordered. Positions 9–18 (SGGGGGGGSA) are enriched in gly residues. The segment at residues 57-132 (QRTCLICGDR…MGMNRKAIRE (76 aa)) is a DNA-binding region (nuclear receptor). 8 residues coordinate Zn(2+): cysteine 60, cysteine 63, cysteine 77, cysteine 80, cysteine 96, cysteine 102, cysteine 112, and cysteine 115. 2 NR C4-type zinc fingers span residues 60–80 (CLIC…CEGC) and 96–120 (CSRD…LLKC). 2 disordered regions span residues 131-150 (REDG…QISE) and 162-198 (FEEE…TLSS). Basic and acidic residues predominate over residues 165–177 (EANHWSNHGDSDH). A sufficient for interaction with UIMC1 region spans residues 172-252 (HGDSDHSSPG…RSLDPQSYSL (81 aa)). The segment covering 178-198 (SSPGNRASESNQPSPGSTLSS) has biased composition (polar residues). Positions 248–479 (QSYSLIHQLV…HSCKTSVGKE (232 aa)) constitute an NR LBD domain.

The protein belongs to the nuclear hormone receptor family. NR6 subfamily. Homodimer. Interacts with UIMC1.

It is found in the nucleus. Orphan nuclear receptor that binds to a response element containing the sequence 5'-TCAAGGTCA-3'. Acts as a regulator of embryonic stem cell pluripotency by mediating repression of POU5F1/OCT4: binds to the DR0 element within the POU5F1/OCT4 promoter and inhibits POU5F1/OCT4 expression during embryonic stem cell differentiation. Involved in the regulation of gene expression in germ cell development during gametogenesis. In Sus scrofa (Pig), this protein is Nuclear receptor subfamily 6 group A member 1 (NR6A1).